A 104-amino-acid chain; its full sequence is MATKQKIRIRLKAFDYKLIDQSAAEIVDTAKRTGAIVKGPVPLPTRMKRFDILRSPHVNKTSRDQLEIRTHQRLMDIVDPTDKTVDALMKLDLPAGVDVEIKLQ.

It belongs to the universal ribosomal protein uS10 family. In terms of assembly, part of the 30S ribosomal subunit.

In terms of biological role, involved in the binding of tRNA to the ribosomes. The polypeptide is Small ribosomal subunit protein uS10 (Variovorax paradoxus (strain S110)).